The primary structure comprises 133 residues: ATP synthase epsilon chain (133 aa).

This sequence belongs to the ATPase epsilon chain family. In terms of assembly, F-type ATPases have 2 components, CF(1) - the catalytic core - and CF(0) - the membrane proton channel. CF(1) has five subunits: alpha(3), beta(3), gamma(1), delta(1), epsilon(1). CF(0) has three main subunits: a, b and c.

It localises to the cell membrane. Functionally, produces ATP from ADP in the presence of a proton gradient across the membrane. The chain is ATP synthase epsilon chain (atpC) from Mycoplasma genitalium (strain ATCC 33530 / DSM 19775 / NCTC 10195 / G37) (Mycoplasmoides genitalium).